The chain runs to 386 residues: Methionine aminopeptidase 1 (386 aa).

Ala2 is modified (N-acetylalanine). The segment at 6-59 adopts a C6H2-type zinc-finger fold; the sequence is TRVCETDGCSSEAKLQCPTCIKLGIQGSYFCSQECFKGSWATHKLLHKKAKDEK. Zn(2+) contacts are provided by Cys9, Cys14, Cys22, Cys25, Cys36, Cys40, His48, and His52. His203 contributes to the a protein binding site. The Zn(2+) site is built by Asp220, Asp231, and His294. His301 provides a ligand contact to a protein. Residues Glu327 and Glu358 each coordinate Zn(2+).

It belongs to the peptidase M24A family. Methionine aminopeptidase type 1 subfamily. In terms of assembly, associates with the 60S ribosomal subunit of the 80S translational complex. The cofactor is Zn(2+). Requires Co(2+) as cofactor. Mn(2+) is required as a cofactor. It depends on Fe(2+) as a cofactor.

The protein resides in the cytoplasm. The enzyme catalyses Release of N-terminal amino acids, preferentially methionine, from peptides and arylamides.. Its function is as follows. Cotranslationally removes the N-terminal methionine from nascent proteins. The N-terminal methionine is often cleaved when the second residue in the primary sequence is small and uncharged (Met-Ala-, Cys, Gly, Pro, Ser, Thr, or Val). Required for normal progression through the cell cycle. The polypeptide is Methionine aminopeptidase 1 (METAP1) (Homo sapiens (Human)).